Consider the following 201-residue polypeptide: Mediator of RNA polymerase II transcription subunit 22 (201 aa).

The stretch at 93–123 (SVNEAIDQRNQQLRALQEECDRKLIALRDEV) forms a coiled coil. The interval 166–201 (LSAPLLASPEPSAGGPLQAAAPTHSHAGGPGPTEHA) is disordered.

As to quaternary structure, component of the Mediator complex, which is composed of MED1, MED4, MED6, MED7, MED8, MED9, MED10, MED11, MED12, MED13, MED13L, MED14, MED15, MED16, MED17, MED18, MED19, MED20, MED21, MED22, MED23, MED24, MED25, MED26, MED27, MED29, MED30, MED31, CCNC, CDK8 and CDC2L6/CDK11. The MED12, MED13, CCNC and CDK8 subunits form a distinct module termed the CDK8 module. Mediator containing the CDK8 module is less active than Mediator lacking this module in supporting transcriptional activation. Individual preparations of the Mediator complex lacking one or more distinct subunits have been variously termed ARC, CRSP, DRIP, PC2, SMCC and TRAP.

The protein localises to the nucleus. Functionally, component of the Mediator complex, a coactivator involved in the regulated transcription of nearly all RNA polymerase II-dependent genes. Mediator functions as a bridge to convey information from gene-specific regulatory proteins to the basal RNA polymerase II transcription machinery. Mediator is recruited to promoters by direct interactions with regulatory proteins and serves as a scaffold for the assembly of a functional preinitiation complex with RNA polymerase II and the general transcription factors. The protein is Mediator of RNA polymerase II transcription subunit 22 (MED22) of Bos taurus (Bovine).